A 460-amino-acid polypeptide reads, in one-letter code: tRNA(Ile)-lysidine synthase (460 aa).

30 to 35 (SGGLDS) is an ATP binding site.

Belongs to the tRNA(Ile)-lysidine synthase family.

It localises to the cytoplasm. It carries out the reaction cytidine(34) in tRNA(Ile2) + L-lysine + ATP = lysidine(34) in tRNA(Ile2) + AMP + diphosphate + H(+). In terms of biological role, ligates lysine onto the cytidine present at position 34 of the AUA codon-specific tRNA(Ile) that contains the anticodon CAU, in an ATP-dependent manner. Cytidine is converted to lysidine, thus changing the amino acid specificity of the tRNA from methionine to isoleucine. The polypeptide is tRNA(Ile)-lysidine synthase (Yersinia pestis).